Reading from the N-terminus, the 625-residue chain is Protein SUPPRESSOR OF GENE SILENCING 3 (625 aa).

Disordered regions lie at residues 1-20 (MSSRAGPMSKEKNVQGGYRP), 30-148 (AGTR…SAQH), and 161-195 (VDNASEEENDSDALDDSDDDLASDDYDSDVSQKSH). Polar residues predominate over residues 54–70 (KPGNTSGKTWVSQNSNP). Low complexity predominate over residues 80–94 (GRGSNVSGRGNNVSG). Positions 161 to 188 (VDNASEEENDSDALDDSDDDLASDDYDS) are enriched in acidic residues. Coiled-coil stretches lie at residues 452 to 533 (KNKL…QQQE) and 564 to 615 (IEFQ…EQLM).

This sequence belongs to the SGS3 family. As to quaternary structure, interacts with begomoviruses protein V2. Interacts with SGIP1 in cytoplasmic granules.

The protein resides in the cytoplasm. Its subcellular location is the perinuclear region. The protein localises to the cytoplasmic granule. Functionally, required for post-transcriptional gene silencing and natural virus resistance. May bind nucleic acids and is essential for the biogenesis of trans-acting siRNAs but is not required for silencing induced by IR-PTGS. Involved in the juvenile-to-adult transition regulation. In case of begomoviruses infection, it is targeted by the viral protein V2 leading to suppression of post-transcriptional gene silencing. Involved in the mechanisms necessary for quick response to heat and subsequent heritable transgenerational memory of heat acclimation (global warming) such as early flowering and attenuated immunity; this process includes epigenetic regulation as well as post-transcriptional gene silencing (PTGS). In response to heat, HSFA2 is activated and promotes the expression of REF6 which in turn derepresses HSFA2, thus establishing an inheritable feedback loop able to trigger SGIP1 and subsequent SGIP1-mediated SGS3 degradation; this prevents the biosynthesis of trans-acting siRNA (tasiRNA) and leads to the release of HTT5, which drives early flowering but attenuates immunity. This is Protein SUPPRESSOR OF GENE SILENCING 3 from Arabidopsis thaliana (Mouse-ear cress).